Reading from the N-terminus, the 115-residue chain is Probable prefoldin subunit 1 (115 aa).

The protein belongs to the prefoldin subunit beta family. Heterohexamer of two PFD-alpha type and four PFD-beta type subunits.

Binds specifically to cytosolic chaperonin (c-CPN) and transfers target proteins to it. Binds to nascent polypeptide chain and promotes folding in an environment in which there are many competing pathways for nonnative proteins. This chain is Probable prefoldin subunit 1 (pfdn1), found in Dictyostelium discoideum (Social amoeba).